The following is a 99-amino-acid chain: NADH-quinone oxidoreductase subunit K (99 aa).

Helical transmembrane passes span 3 to 23, 28 to 48, and 59 to 79; these read PANY…GVLL, IVMF…FVTF, and MIAF…LAII.

It belongs to the complex I subunit 4L family. As to quaternary structure, NDH-1 is composed of 14 different subunits. Subunits NuoA, H, J, K, L, M, N constitute the membrane sector of the complex.

Its subcellular location is the cell membrane. It carries out the reaction a quinone + NADH + 5 H(+)(in) = a quinol + NAD(+) + 4 H(+)(out). Functionally, NDH-1 shuttles electrons from NADH, via FMN and iron-sulfur (Fe-S) centers, to quinones in the respiratory chain. The immediate electron acceptor for the enzyme in this species is believed to be a menaquinone. Couples the redox reaction to proton translocation (for every two electrons transferred, four hydrogen ions are translocated across the cytoplasmic membrane), and thus conserves the redox energy in a proton gradient. This is NADH-quinone oxidoreductase subunit K from Mycobacterium bovis (strain ATCC BAA-935 / AF2122/97).